Reading from the N-terminus, the 593-residue chain is A-type ATP synthase subunit A (593 aa).

236-243 (GPFGSGKT) contributes to the ATP binding site.

This sequence belongs to the ATPase alpha/beta chains family. As to quaternary structure, has multiple subunits with at least A(3), B(3), C, D, E, F, H, I and proteolipid K(x).

Its subcellular location is the cell membrane. It catalyses the reaction ATP + H2O + 4 H(+)(in) = ADP + phosphate + 5 H(+)(out). Functionally, component of the A-type ATP synthase that produces ATP from ADP in the presence of a proton gradient across the membrane. The A chain is the catalytic subunit. This is A-type ATP synthase subunit A from Pyrobaculum islandicum (strain DSM 4184 / JCM 9189 / GEO3).